The following is a 512-amino-acid chain: MEELKGYLEKSRSKQQHFLYPLLFQEYIYALAHDHGLNVNGSFFYEPAEISGYDKKFSSLLAKRLITRMYQQNYLINSVNDSNQNRFVGHNRNFYSQMISEGFAVIVEIXFSLRLVSSLEEKKEIPKSQNLRSIHSIFPFFEDKLSHLNCVSDILIPYPVHLEILVQILQCWIQDVPSLHLLRFFFHEYHNWNNLITPKKSNYYGFSKENPRLFLFLYNSYVVECESILVFLRKQSSYLRSTSSGTFLERAHFYEKIEQHLVVLCCNDFQKTLWLFKDPFMHYVRYQGKSILASKGTHLLMKKWKSYFVNFWQCHFHFWSQPCRIHINQFSNFSFYFLGYLSSVPINPSAVKSQMLENSFLVDTATKKFETIVPIIPMIGALSKAKFCNVSGNPISKPVWADLSDSDIIDRFGRTCRNLSHYYSGSSKKQSLYRIKYILRLSCARTLARKHKSTVRAFLQRLGSEFLEEFFTEEEKALSLILPRISYPLHKLYRERIWYLDIIRINDLVNHL.

This sequence belongs to the intron maturase 2 family. MatK subfamily.

The protein localises to the plastid. It localises to the chloroplast. Its function is as follows. Usually encoded in the trnK tRNA gene intron. Probably assists in splicing its own and other chloroplast group II introns. This chain is Maturase K, found in Amorphophallus titanum (Titan arum).